The sequence spans 210 residues: MATRIENKKLSKSSSAWMKEHIDDHYVQKAQKDGYRARAAYKLLEINEKTNLIKKGMTVVDLGSAPGSWSQVAGHLVGEKGILIASDILPMDTLPDVTFIQGDFREPEVFDRIMAEVGDRQVDVVLSDMAPNTAGNSAIDQPRMMYLCELAVDFALATLPEGGALIMKVFQGEGTQELRKQMQADFSKIRSIKPGASRPRSKEIFWIAIK.

Positions 67, 69, 87, 103, and 128 each coordinate S-adenosyl-L-methionine. K168 serves as the catalytic Proton acceptor.

The protein belongs to the class I-like SAM-binding methyltransferase superfamily. RNA methyltransferase RlmE family.

Its subcellular location is the cytoplasm. It catalyses the reaction uridine(2552) in 23S rRNA + S-adenosyl-L-methionine = 2'-O-methyluridine(2552) in 23S rRNA + S-adenosyl-L-homocysteine + H(+). In terms of biological role, specifically methylates the uridine in position 2552 of 23S rRNA at the 2'-O position of the ribose in the fully assembled 50S ribosomal subunit. This chain is Ribosomal RNA large subunit methyltransferase E, found in Psychrobacter cryohalolentis (strain ATCC BAA-1226 / DSM 17306 / VKM B-2378 / K5).